The sequence spans 181 residues: Peptide methionine sulfoxide reductase MsrA (181 aa).

The active site involves Cys-14.

Belongs to the MsrA Met sulfoxide reductase family.

It catalyses the reaction L-methionyl-[protein] + [thioredoxin]-disulfide + H2O = L-methionyl-(S)-S-oxide-[protein] + [thioredoxin]-dithiol. It carries out the reaction [thioredoxin]-disulfide + L-methionine + H2O = L-methionine (S)-S-oxide + [thioredoxin]-dithiol. In terms of biological role, has an important function as a repair enzyme for proteins that have been inactivated by oxidation. Catalyzes the reversible oxidation-reduction of methionine sulfoxide in proteins to methionine. This is Peptide methionine sulfoxide reductase MsrA from Bacillus licheniformis (strain ATCC 14580 / DSM 13 / JCM 2505 / CCUG 7422 / NBRC 12200 / NCIMB 9375 / NCTC 10341 / NRRL NRS-1264 / Gibson 46).